Here is a 347-residue protein sequence, read N- to C-terminus: Guanine nucleotide-binding protein alpha-5 subunit (347 aa).

Glycine 2 carries the N-myristoyl glycine lipid modification. A lipid anchor (S-palmitoyl cysteine) is attached at cysteine 3. The G-alpha domain maps to 27 to 347; that stretch reads NETKLLLLGP…KNIFNTIINY (321 aa). The interval 30-43 is G1 motif; it reads KLLLLGPGESGKST. GTP contacts are provided by residues 35 to 42, 170 to 176, 195 to 199, 264 to 267, and alanine 319; these read GPGESGKS, LRSRVRT, DVGGQ, and NKVD. Residues serine 42 and threonine 176 each contribute to the Mg(2+) site. The segment at 168 to 176 is G2 motif; that stretch reads DVLRSRVRT. The interval 191–200 is G3 motif; that stretch reads FRMLDVGGQR. The tract at residues 260–267 is G4 motif; it reads IIFFNKVD. The segment at 317–322 is G5 motif; it reads TCAIDT.

It belongs to the G-alpha family. G(q) subfamily. As to quaternary structure, g proteins are composed of 3 units; alpha, beta and gamma. The alpha chain contains the guanine nucleotide binding site.

In terms of biological role, guanine nucleotide-binding proteins (G proteins) are involved as modulators or transducers in various transmembrane signaling systems. The sequence is that of Guanine nucleotide-binding protein alpha-5 subunit (gpaE) from Dictyostelium discoideum (Social amoeba).